The chain runs to 333 residues: Cell shape-determining protein Mbl (333 aa).

ATP-binding positions include 12–14 (TAN), 156–158 (GGT), 204–207 (EDIK), and 284–287 (GGAL).

The protein belongs to the FtsA/MreB family. Forms polymers.

The protein resides in the cytoplasm. Functionally, forms membrane-associated dynamic filaments that are essential for cell shape determination. Acts by regulating cell wall synthesis and cell elongation, and thus cell shape. A feedback loop between cell geometry and Mbl localization may maintain elongated cell shape by targeting cell wall growth to regions of negative cell wall curvature. This Bacillus cereus (strain ATCC 10987 / NRS 248) protein is Cell shape-determining protein Mbl.